The sequence spans 427 residues: Trigger factor (427 aa).

One can recognise a PPIase FKBP-type domain in the interval 163-248; that stretch reads GDTVVIDFVG…IHEVKEKEVP (86 aa).

The protein belongs to the FKBP-type PPIase family. Tig subfamily.

It is found in the cytoplasm. The catalysed reaction is [protein]-peptidylproline (omega=180) = [protein]-peptidylproline (omega=0). Involved in protein export. Acts as a chaperone by maintaining the newly synthesized protein in an open conformation. Functions as a peptidyl-prolyl cis-trans isomerase. The sequence is that of Trigger factor from Streptococcus sanguinis (strain SK36).